A 736-amino-acid polypeptide reads, in one-letter code: 3',5'-cyclic-AMP phosphodiesterase 4B (736 aa).

Disordered stretches follow at residues 51–78, 189–209, and 282–301; these read QLPP…TTLP, LHGT…SRVN, and KQND…KKKK. S290 is modified (phosphoserine). A PDEase domain is found at 330–659; it reads VNTENEDHLA…NWYQSMIPQS (330 aa). Catalysis depends on H406, which acts as the Proton donor. H406 contributes to the 3',5'-cyclic AMP binding site. AMP-binding residues include H406 and H410. Residues H410, H446, D447, and D564 each coordinate Zn(2+). Positions 447, 564, 615, and 618 each coordinate AMP. A Mg(2+)-binding site is contributed by D447. D447 provides a ligand contact to Mn(2+). Positions 615 and 618 each coordinate 3',5'-cyclic AMP. A phosphoserine mark is found at S659 and S661. The interval 685–736 is disordered; the sequence is DEEDSEGPEKEGEGHSYFSSTKTLCVIDPENRDSLGETDIDIATEDKSPVDT.

The protein belongs to the cyclic nucleotide phosphodiesterase family. PDE4 subfamily. As to quaternary structure, interacts with DISC1. Zn(2+) is required as a cofactor. Requires Mg(2+) as cofactor. It depends on Mn(2+) as a cofactor. Expressed in brain, heart, lung and skeletal muscle. Expressed in white blood cells. In terms of tissue distribution, brain-specific isoform.

The protein resides in the cytoplasm. It localises to the cell membrane. The catalysed reaction is 3',5'-cyclic AMP + H2O = AMP + H(+). It participates in purine metabolism; 3',5'-cyclic AMP degradation; AMP from 3',5'-cyclic AMP: step 1/1. Its activity is regulated as follows. Inhibited by rolipram. In terms of biological role, hydrolyzes the second messenger cAMP, which is a key regulator of many important physiological processes. May be involved in mediating central nervous system effects of therapeutic agents ranging from antidepressants to antiasthmatic and anti-inflammatory agents. This chain is 3',5'-cyclic-AMP phosphodiesterase 4B, found in Homo sapiens (Human).